Reading from the N-terminus, the 222-residue chain is Small ribosomal subunit protein uS3 (222 aa).

A KH type-2 domain is found at 39-108 (IRKFIKKELF…NVLINIVEVK (70 aa)).

This sequence belongs to the universal ribosomal protein uS3 family. As to quaternary structure, part of the 30S ribosomal subunit. Forms a tight complex with proteins S10 and S14.

In terms of biological role, binds the lower part of the 30S subunit head. Binds mRNA in the 70S ribosome, positioning it for translation. The chain is Small ribosomal subunit protein uS3 from Clostridium perfringens (strain ATCC 13124 / DSM 756 / JCM 1290 / NCIMB 6125 / NCTC 8237 / Type A).